Reading from the N-terminus, the 263-residue chain is tRNA1(Val) (adenine(37)-N6)-methyltransferase (263 aa).

Belongs to the methyltransferase superfamily. tRNA (adenine-N(6)-)-methyltransferase family.

It is found in the cytoplasm. The enzyme catalyses adenosine(37) in tRNA1(Val) + S-adenosyl-L-methionine = N(6)-methyladenosine(37) in tRNA1(Val) + S-adenosyl-L-homocysteine + H(+). Specifically methylates the adenine in position 37 of tRNA(1)(Val) (anticodon cmo5UAC). The chain is tRNA1(Val) (adenine(37)-N6)-methyltransferase from Pseudoalteromonas atlantica (strain T6c / ATCC BAA-1087).